Consider the following 130-residue polypeptide: Small ribosomal subunit protein uS9 (130 aa).

Residues 109 to 130 form a disordered region; sequence RMKERKKYGLKGARRAPQFSKR. Residues 111–130 are compositionally biased toward basic residues; sequence KERKKYGLKGARRAPQFSKR.

Belongs to the universal ribosomal protein uS9 family.

The sequence is that of Small ribosomal subunit protein uS9 from Alkaliphilus metalliredigens (strain QYMF).